A 281-amino-acid chain; its full sequence is Energy-coupling factor transporter ATP-binding protein EcfA1 (281 aa).

The ABC transporter domain maps to 6-242; sequence IDVKHLDYRY…GEALIKMGLD (237 aa). Position 42–49 (42–49) interacts with ATP; it reads GHNGSGKS.

This sequence belongs to the ABC transporter superfamily. Energy-coupling factor EcfA family. In terms of assembly, forms a stable energy-coupling factor (ECF) transporter complex composed of 2 membrane-embedded substrate-binding proteins (S component), 2 ATP-binding proteins (A component) and 2 transmembrane proteins (T component).

It localises to the cell membrane. Its function is as follows. ATP-binding (A) component of a common energy-coupling factor (ECF) ABC-transporter complex. Unlike classic ABC transporters this ECF transporter provides the energy necessary to transport a number of different substrates. The polypeptide is Energy-coupling factor transporter ATP-binding protein EcfA1 (Lactiplantibacillus plantarum (strain ATCC BAA-793 / NCIMB 8826 / WCFS1) (Lactobacillus plantarum)).